Here is an 854-residue protein sequence, read N- to C-terminus: Discoidin domain-containing receptor 2 (854 aa).

The N-terminal stretch at 1–21 is a signal peptide; the sequence is MIPIPRMPLVLLLLLLILGSA. Topologically, residues 22-399 are extracellular; sequence KAQVNPAICR…MLKVDDSNTR (378 aa). An F5/8 type C domain is found at 30–185; that stretch reads CRYPLGMSGG…VCMRVELYGC (156 aa). 2 cysteine pairs are disulfide-bonded: Cys-30/Cys-185 and Cys-73/Cys-177. Asn-121, Asn-213, Asn-261, Asn-280, and Asn-372 each carry an N-linked (GlcNAc...) asparagine glycan. A helical membrane pass occupies residues 400–421; it reads ILIGCLVAIIFILLAIIVIILW. Residues 422 to 854 are Cytoplasmic-facing; that stretch reads RQFWQKMLEK…HLLLLQQGAE (433 aa). The interval 452–471 is disordered; the sequence is SMFNNNRSSSPSEQESNSTY. A compositionally biased stretch (low complexity) spans 455 to 469; sequence NNNRSSSPSEQESNS. A Phosphotyrosine; by SRC and autocatalysis modification is found at Tyr-471. Positions 563–848 constitute a Protein kinase domain; it reads LAFKEKLGEG…PSFQEIHLLL (286 aa). ATP is bound by residues 569–577 and Lys-608; that span reads LGEGQFGEV. The active-site Proton acceptor is the Asp-709. Phosphotyrosine; by SRC and autocatalysis is present on residues Tyr-735, Tyr-739, and Tyr-740.

It belongs to the protein kinase superfamily. Tyr protein kinase family. Insulin receptor subfamily. Binds hydroxyproline-rich sequence motifs in fibrillar, glycosylated collagen, such as the GQOGVMGFO motif, where O stands for hydroxyproline. Interacts with SRC. Interacts (tyrosine phosphorylated) with SHC1. Post-translationally, N-glycosylated. In terms of processing, tyrosine phosphorylated in response to collagen binding. Phosphorylated by SRC; this is required for activation and subsequent autophosphorylation on additional tyrosine residues. As to expression, widely expressed. Detected in lung, ovary, skin and in testis Leydig cells (at protein level). Widely expressed. Detected at high levels in heart, lung, skeletal muscle, central nervous system (CNS) and kidney, and at lower levels in brain and testis. Detected in chondrocytes in tibia growth plates of young mice.

The protein localises to the cell membrane. The catalysed reaction is L-tyrosyl-[protein] + ATP = O-phospho-L-tyrosyl-[protein] + ADP + H(+). With respect to regulation, present in an inactive state in the absence of collagen binding and phosphorylation by SRC. Tyrosine phosphorylation enhances the affinity for ATP and the catalytic activity. Functionally, tyrosine kinase that functions as a cell surface receptor for fibrillar collagen and regulates cell differentiation, remodeling of the extracellular matrix, cell migration and cell proliferation. Required for normal bone development. Regulates osteoblast differentiation and chondrocyte maturation via a signaling pathway that involves MAP kinases and leads to the activation of the transcription factor RUNX2. Regulates remodeling of the extracellular matrix by up-regulation of the collagenases MMP1, MMP2 and MMP13, and thereby facilitates cell migration and tumor cell invasion. Promotes fibroblast migration and proliferation, and thereby contributes to cutaneous wound healing. This chain is Discoidin domain-containing receptor 2 (Ddr2), found in Mus musculus (Mouse).